Here is a 660-residue protein sequence, read N- to C-terminus: tRNA 5-methylaminomethyl-2-thiouridine biosynthesis bifunctional protein MnmC (660 aa).

Positions 1-242 (MTDRIVPATL…KRAMLVGEFA (242 aa)) are tRNA (mnm(5)s(2)U34)-methyltransferase. The interval 266-660 (IGAGLAGCAV…VRALRHGRVA (395 aa)) is FAD-dependent cmnm(5)s(2)U34 oxidoreductase.

The protein in the N-terminal section; belongs to the methyltransferase superfamily. tRNA (mnm(5)s(2)U34)-methyltransferase family. In the C-terminal section; belongs to the DAO family. It depends on FAD as a cofactor.

The protein localises to the cytoplasm. It catalyses the reaction 5-aminomethyl-2-thiouridine(34) in tRNA + S-adenosyl-L-methionine = 5-methylaminomethyl-2-thiouridine(34) in tRNA + S-adenosyl-L-homocysteine + H(+). In terms of biological role, catalyzes the last two steps in the biosynthesis of 5-methylaminomethyl-2-thiouridine (mnm(5)s(2)U) at the wobble position (U34) in tRNA. Catalyzes the FAD-dependent demodification of cmnm(5)s(2)U34 to nm(5)s(2)U34, followed by the transfer of a methyl group from S-adenosyl-L-methionine to nm(5)s(2)U34, to form mnm(5)s(2)U34. In Burkholderia mallei (strain NCTC 10247), this protein is tRNA 5-methylaminomethyl-2-thiouridine biosynthesis bifunctional protein MnmC.